A 217-amino-acid polypeptide reads, in one-letter code: Formate dehydrogenase, nitrate-inducible, cytochrome b556(Fdn) subunit (217 aa).

The Cytoplasmic portion of the chain corresponds to 1–11 (MSKSKMIVRTK). Residues 12 to 36 (FIDRACHWTVVICFFLVALSGISFF) traverse the membrane as a helical segment. His-18 provides a ligand contact to heme b. Residues 37-52 (FPTLQWLTQTFGTPQM) lie on the Periplasmic side of the membrane. Residues 53 to 74 (GRILHPFFGIAIFVALMFMFVR) traverse the membrane as a helical segment. Heme b is bound at residue His-57. Residues 75 to 110 (FVHHNIPDKKDIPWLLNIVEVLKGNEHKVADVGKYN) lie on the Cytoplasmic side of the membrane. The helical transmembrane segment at 111-134 (AGQKMMFWSIMSMIFVLLVTGVII) threads the bilayer. Residues 135-150 (WRPYFAQYFPMQVVRY) lie on the Periplasmic side of the membrane. The chain crosses the membrane as a helical span at residues 151 to 175 (SLLIHAAAGIILIHAILIHMYMAFW). Heme b-binding residues include His-155 and His-169. His-169 provides a ligand contact to a menaquinone. Over 176-217 (VKGSIKGMIEGKVSRRWAKKHHPRWYREIEKAEAKKESEEGI) the chain is Cytoplasmic.

The protein belongs to the formate dehydrogenase gamma subunit family. Trimer of heterotrimers, consisting of subunits alpha, beta and gamma. It depends on heme as a cofactor.

It is found in the cell inner membrane. In terms of biological role, formate dehydrogenase allows the bacterium to use formate as major electron donor during anaerobic respiration, when nitrate is used as electron acceptor. Subunit gamma is the cytochrome b556 component of the formate dehydrogenase-N, and also contains a menaquinone reduction site that receives electrons from the beta subunit (FdnH), through its hemes. Formate dehydrogenase-N is part of a system that generates proton motive force, together with the dissimilatory nitrate reductase (Nar). This chain is Formate dehydrogenase, nitrate-inducible, cytochrome b556(Fdn) subunit (fdnI), found in Escherichia coli O157:H7.